The primary structure comprises 37 residues: Omega-conotoxin-like S6.7 (37 aa).

Residues 1–4 constitute a propeptide that is removed on maturation; the sequence is KSTS. 3 disulfide bridges follow: Cys-5/Cys-20, Cys-12/Cys-23, and Cys-19/Cys-32.

This sequence belongs to the conotoxin O1 superfamily. In terms of tissue distribution, expressed by the venom duct.

The protein localises to the secreted. In terms of biological role, omega-conotoxins act at presynaptic membranes, they bind and block voltage-gated calcium channels (Cav). This toxin blocks N-, P- and Q-type calcium channels. In Conus striatus (Striated cone), this protein is Omega-conotoxin-like S6.7.